The following is a 181-amino-acid chain: Probable toxin TacT (181 aa).

The protein belongs to the acetyltransferase family. Forms a complex with cognate antitoxin TacA.

Probable toxin component of a type II toxin-antitoxin (TA) system. Might acetylate tRNA and inhibit translation. Should be neutralized by cognate antitoxin TacA (y4aR). This is Probable toxin TacT from Sinorhizobium fredii (strain NBRC 101917 / NGR234).